Consider the following 247-residue polypeptide: Phosphonates import ATP-binding protein PhnC (247 aa).

Residues 5 to 246 (IEVKNLVKNY…EDDIRKVYQT (242 aa)) enclose the ABC transporter domain. 37–44 (GESGAGKS) is an ATP binding site.

It belongs to the ABC transporter superfamily. Phosphonates importer (TC 3.A.1.9.1) family. As to quaternary structure, the complex is composed of two ATP-binding proteins (PhnC), two transmembrane proteins (PhnE) and a solute-binding protein (PhnD).

It localises to the cell inner membrane. It carries out the reaction phosphonate(out) + ATP + H2O = phosphonate(in) + ADP + phosphate + H(+). In terms of biological role, part of the ABC transporter complex PhnCDE involved in phosphonates import. Responsible for energy coupling to the transport system. The polypeptide is Phosphonates import ATP-binding protein PhnC (Fusobacterium nucleatum subsp. nucleatum (strain ATCC 25586 / DSM 15643 / BCRC 10681 / CIP 101130 / JCM 8532 / KCTC 2640 / LMG 13131 / VPI 4355)).